The following is a 105-amino-acid chain: MIAGYIFLLIAILSEAAAAAMLKISDGFARWQPSVLVVIGYGLAFYMMSLTLQVIPLSLSYATWSGAGTVLTAIIGVLWFQEKLNRRNIAGIICLVSGVVLINLS.

Transmembrane regions (helical) follow at residues 2 to 22 (IAGYIFLLIAILSEAAAAAML), 35 to 55 (VLVVIGYGLAFYMMSLTLQVI), 60 to 80 (SYATWSGAGTVLTAIIGVLWF), and 87 to 104 (RNIAGIICLVSGVVLINL).

Belongs to the drug/metabolite transporter (DMT) superfamily. Small multidrug resistance (SMR) (TC 2.A.7.1) family. EbrA/EbrB subfamily. In terms of assembly, the efflux pump is composed of EbrA and EbrB.

It localises to the cell membrane. Functionally, part of a multidrug efflux pump. Confers resistance to cationic lipophilic dyes such as ethidium bromide, acriflavine, pyronine Y and safranin O. The efflux is probably coupled to an influx of protons. The chain is Multidrug resistance protein EbrA (ebrA) from Bacillus licheniformis (strain ATCC 14580 / DSM 13 / JCM 2505 / CCUG 7422 / NBRC 12200 / NCIMB 9375 / NCTC 10341 / NRRL NRS-1264 / Gibson 46).